Here is a 394-residue protein sequence, read N- to C-terminus: NAD(P)H-quinone oxidoreductase subunit H (394 aa).

It belongs to the complex I 49 kDa subunit family. NDH-1 can be composed of about 15 different subunits; different subcomplexes with different compositions have been identified which probably have different functions.

Its subcellular location is the cellular thylakoid membrane. The enzyme catalyses a plastoquinone + NADH + (n+1) H(+)(in) = a plastoquinol + NAD(+) + n H(+)(out). The catalysed reaction is a plastoquinone + NADPH + (n+1) H(+)(in) = a plastoquinol + NADP(+) + n H(+)(out). Its function is as follows. NDH-1 shuttles electrons from an unknown electron donor, via FMN and iron-sulfur (Fe-S) centers, to quinones in the respiratory and/or the photosynthetic chain. The immediate electron acceptor for the enzyme in this species is believed to be plastoquinone. Couples the redox reaction to proton translocation, and thus conserves the redox energy in a proton gradient. Cyanobacterial NDH-1 also plays a role in inorganic carbon-concentration. In Synechococcus sp. (strain JA-3-3Ab) (Cyanobacteria bacterium Yellowstone A-Prime), this protein is NAD(P)H-quinone oxidoreductase subunit H.